The following is an 81-amino-acid chain: AANQHLCGSHLVEALYLVCGERGFFYSPKTXXDVEQPLVNGPLHGEVGELPFQHEEYQXXGIVEQCCENPCSLYQLENYCN.

Disulfide bonds link Cys-7–Cys-67, Cys-19–Cys-80, and Cys-66–Cys-71. The propeptide at 33-58 (DVEQPLVNGPLHGEVGELPFQHEEYQ) is c peptide.

This sequence belongs to the insulin family. As to quaternary structure, heterodimer of a B chain and an A chain linked by two disulfide bonds.

Its subcellular location is the secreted. Insulin decreases blood glucose concentration. It increases cell permeability to monosaccharides, amino acids and fatty acids. It accelerates glycolysis, the pentose phosphate cycle, and glycogen synthesis in liver. The sequence is that of Insulin (INS) from Anas platyrhynchos (Mallard).